The following is a 456-amino-acid chain: Glutamate-gated chloride channel (456 aa).

Positions 1–22 (MGSGHYFWAILYFASLCSASLA) are cleaved as a signal peptide. The Extracellular portion of the chain corresponds to 23-245 (NNAKINFREK…VDLLFKREFS (223 aa)). L-glutamate is bound by residues arginine 71, arginine 90, and serine 154. Cysteines 163 and 177 form a disulfide. L-glutamate is bound at residue serine 183. A disulfide bridge links cysteine 222 with cysteine 233. The chain crosses the membrane as a helical span at residues 246–268 (YYLIQIYIPCCMLVIVSWVSFWL). Residues 269-273 (DQGAV) are Cytoplasmic-facing. A helical membrane pass occupies residues 274-295 (PARVSLGVTTLLTMATQTSGIN). The Extracellular segment spans residues 296–302 (ASLPPVS). A helical transmembrane segment spans residues 303–323 (YTKAIDVWTGVCLTFVFGALL). Over 324-426 (EFALVNYASR…RQCSRSKRID (103 aa)) the chain is Cytoplasmic. A helical membrane pass occupies residues 427 to 450 (VISRITFPLVFALFNLVYWSTYLF). Residues 451–456 (REEEDE) lie on the Extracellular side of the membrane.

This sequence belongs to the ligand-gated ion channel (TC 1.A.9) family. Glutamate-gated chloride channel (TC 1.A.9.4) subfamily. Pentamer. Homomultimer. In terms of tissue distribution, expressed in the medulla layers (at protein level). Expressed in all major ON pathway medulla neurons (Mi1, Tm3, Mi4, and Mi9) and in OFF pathway neurons (Tm1, Tm2, Tm4, and Tm9).

The protein localises to the postsynaptic cell membrane. It localises to the cell membrane. With respect to regulation, glutamate binding triggers a rapidly reversible current, while the anti-helmintic drug ivermectin triggers a permanently open channel configuration. Inhibited by picrotoxin. Glutamate-gated chloride channel subunit. Together with Gamma-aminobutyric acid receptor Rdl, plays an important role in the visual response by regulating the activity of ON/OFF-selective neurons. The protein is Glutamate-gated chloride channel (GluClalpha) of Drosophila melanogaster (Fruit fly).